Here is a 142-residue protein sequence, read N- to C-terminus: Hemoglobin subunit alpha-B (142 aa).

One can recognise a Globin domain in the interval 2 to 142 (VLSPTDKSNV…VSTVLTSKYR (141 aa)). Position 59 (H59) interacts with O2. H88 provides a ligand contact to heme b.

It belongs to the globin family. As to quaternary structure, heterotetramer of two alpha chains and two beta chains. Red blood cells.

Involved in oxygen transport from the lung to the various peripheral tissues. The polypeptide is Hemoglobin subunit alpha-B (HBAB) (Otolemur crassicaudatus (Brown greater galago)).